The sequence spans 540 residues: Type II methyltransferase M.AccI (540 aa).

The protein belongs to the N(4)/N(6)-methyltransferase family. In terms of assembly, monomer.

It catalyses the reaction a 2'-deoxyadenosine in DNA + S-adenosyl-L-methionine = an N(6)-methyl-2'-deoxyadenosine in DNA + S-adenosyl-L-homocysteine + H(+). Functionally, a gamma subtype methylase, recognizes the double-stranded sequence 5'-GTMKAC-3', methylates A-5 on both strands, and protects the DNA from cleavage by the AccI endonuclease. In Acinetobacter calcoaceticus, this protein is Type II methyltransferase M.AccI (accIM).